The sequence spans 1077 residues: Zinc finger protein 518B (1077 aa).

Over residues 9 to 30 (YTTQVNGGPSSLTMSPKQPNRA) the composition is skewed to polar residues. The segment at 9–35 (YTTQVNGGPSSLTMSPKQPNRATRTER) is disordered. C2H2-type zinc fingers lie at residues 160-182 (FICS…LVKH) and 188-211 (YRCE…RRVH). The tract at residues 372–397 (TSRGDGGTSECLSTEKGSGGQKKMLS) is disordered. A Glycyl lysine isopeptide (Lys-Gly) (interchain with G-Cter in SUMO2) cross-link involves residue lysine 479. Disordered regions lie at residues 561–585 (LVSS…GQVS), 599–622 (GEDK…ETAG), 675–739 (KPSS…GSRQ), and 825–852 (QPLT…RKED). Basic and acidic residues predominate over residues 564–574 (SDRKLEDKQME). Composition is skewed to polar residues over residues 605–621 (SQQP…SETA) and 675–688 (KPSS…QRRS). Residues lysine 847 and lysine 861 each participate in a glycyl lysine isopeptide (Lys-Gly) (interchain with G-Cter in SUMO2) cross-link. The tract at residues 895-914 (QVNSTKKKNKMQANPGRYFK) is disordered. The segment at 1039–1061 (FKCWFCGRLYEDQEEWMSHGQRH) adopts a C2H2-type 3 zinc-finger fold.

It belongs to the krueppel C2H2-type zinc-finger protein family.

The protein resides in the nucleus. Functionally, through its association with the EHMT1-EHMT2/G9A and PRC2/EED-EZH2 histone methyltransferase complexes may function in gene silencing, regulating repressive post-translational methylation of histone tails at promoters of target genes. This chain is Zinc finger protein 518B (Znf518b), found in Mus musculus (Mouse).